The following is a 416-amino-acid chain: UDP-N-acetylglucosamine 1-carboxyvinyltransferase (416 aa).

22-23 serves as a coordination point for phosphoenolpyruvate; the sequence is KN. Arg92 serves as a coordination point for UDP-N-acetyl-alpha-D-glucosamine. The Proton donor role is filled by Cys116. Cys116 carries the 2-(S-cysteinyl)pyruvic acid O-phosphothioketal modification. Residues 121-125, Asp304, and Ile326 each bind UDP-N-acetyl-alpha-D-glucosamine; that span reads RPVDQ.

This sequence belongs to the EPSP synthase family. MurA subfamily.

It localises to the cytoplasm. The catalysed reaction is phosphoenolpyruvate + UDP-N-acetyl-alpha-D-glucosamine = UDP-N-acetyl-3-O-(1-carboxyvinyl)-alpha-D-glucosamine + phosphate. The protein operates within cell wall biogenesis; peptidoglycan biosynthesis. In terms of biological role, cell wall formation. Adds enolpyruvyl to UDP-N-acetylglucosamine. The polypeptide is UDP-N-acetylglucosamine 1-carboxyvinyltransferase (Cupriavidus necator (strain ATCC 17699 / DSM 428 / KCTC 22496 / NCIMB 10442 / H16 / Stanier 337) (Ralstonia eutropha)).